Consider the following 382-residue polypeptide: Carboxynorspermidine/carboxyspermidine decarboxylase (382 aa).

K41 bears the N6-(pyridoxal phosphate)lysine mark. Positions 236 and 272 each coordinate substrate.

This sequence belongs to the Orn/Lys/Arg decarboxylase class-II family. NspC subfamily. In terms of assembly, homodimer. Pyridoxal 5'-phosphate serves as cofactor.

The protein resides in the cytoplasm. The enzyme catalyses carboxynorspermidine + H(+) = norspermidine + CO2. It carries out the reaction carboxyspermidine + H(+) = spermidine + CO2. In terms of biological role, catalyzes the decarboxylation of carboxynorspermidine and carboxyspermidine in vitro. In vivo, responsible for synthesizing spermidine, but not sym-norspermidine. This Campylobacter jejuni subsp. jejuni serotype O:6 (strain 81116 / NCTC 11828) protein is Carboxynorspermidine/carboxyspermidine decarboxylase.